The chain runs to 392 residues: Isocitrate dehydrogenase [NAD] subunit gamma, mitochondrial (392 aa).

The N-terminal 39 residues, 1-39 (MALKVATAAGGAVKAALRPALLWRPWEVLGSHEAPRRSF), are a transit peptide targeting the mitochondrion. Citrate-binding residues include Thr119 and Asn132. Residues Arg135, Arg166, and Asp253 each contribute to the substrate site. Position 253 (Asp253) interacts with Mn(2+). ADP contacts are provided by Asn311, Thr312, and Asn323.

This sequence belongs to the isocitrate and isopropylmalate dehydrogenases family. As to quaternary structure, heterooligomer of subunits alpha (IDH3A), beta (IDH3B), and gamma (IDH3G) in the apparent ratio of 2:1:1. The heterodimer containing one IDH3A and one IDH3B subunit and the heterodimer containing one IDH3A and one IDH3G subunit assemble into a heterotetramer (which contains two subunits of IDH3A, one of IDH3B and one of IDH3G) and further into the heterooctamer. The cofactor is Mg(2+). Mn(2+) serves as cofactor.

Its subcellular location is the mitochondrion. The heterotetramer and the heterodimer composed of IDH3A and IDH3G subunits can be allosterically activated by citrate (CIT) or/and ADP, and the two activators can act independently or synergistically. The heterodimer composed of IDH3A and IDH3B subunits cannot be allosterically regulated and the allosteric regulation of the heterotetramer is through the IDH3G subunit and not the IDH3B subunit. The IDH3G subunit contains the allosteric site which consists of a CIT-binding site and an ADP-binding site, and the binding of CIT and ADP causes conformational changes at the allosteric site which are transmitted to the active site in the catalytic subunit (IDH3A) through a cascade of conformational changes at the heterodimer interface, leading to stabilization of the isocitrate-binding at the active site and thus activation of the enzyme. ATP can activate the heterotetramer and the heterodimer composed of IDH3A and IDH3G subunits at low concentrations but inhibits their activities at high concentrations, whereas ATP exhibits only inhibitory effect on the heterodimer composed of IDH3A and IDH3B subunits. Its function is as follows. Regulatory subunit which plays a role in the allosteric regulation of the enzyme catalyzing the decarboxylation of isocitrate (ICT) into alpha-ketoglutarate. The heterodimer composed of the alpha (IDH3A) and beta (IDH3B) subunits and the heterodimer composed of the alpha (IDH3A) and gamma (IDH3G) subunits, have considerable basal activity but the full activity of the heterotetramer (containing two subunits of IDH3A, one of IDH3B and one of IDH3G) requires the assembly and cooperative function of both heterodimers. The protein is Isocitrate dehydrogenase [NAD] subunit gamma, mitochondrial (IDH3G) of Bos taurus (Bovine).